The chain runs to 239 residues: Sugar fermentation stimulation protein homolog (239 aa).

Belongs to the SfsA family.

The protein is Sugar fermentation stimulation protein homolog of Caulobacter vibrioides (strain ATCC 19089 / CIP 103742 / CB 15) (Caulobacter crescentus).